Here is a 277-residue protein sequence, read N- to C-terminus: MSAIREKVNISERRACRLVGLSRSVLHYDAKPDHENEVLAARLVELAHERRRFGYRRLHALVEREGTHANHKRIYRLYREAGLAVRRRRKRQGVMIEREQLALPGAPNEVWSIDFVMDALSNGRRVKCLTVVDDFTKEAVDIVVDHGISGLYVARALDRAARFRGYPKAVRTDQGPEFTSRALDQWAYANGVTLKLIQAGKPTQNAYIESFNGKFRDECLNEHWFTTLAHARAVIAAWRQDYNEQRPHSALNYLAPSEFAAKHRATADAPAAFQELV.

Residues 103-264 enclose the Integrase catalytic domain; sequence LPGAPNEVWS…APSEFAAKHR (162 aa).

In Burkholderia multivorans (strain ATCC 17616 / 249), this protein is Insertion element IS407 uncharacterized 31.7 kDa protein.